Here is a 159-residue protein sequence, read N- to C-terminus: CASP-like protein 1C1 (159 aa).

Over 1-6 (MAKIKR) the chain is Cytoplasmic. A helical transmembrane segment spans residues 7–27 (IITTLVRLLVLGAALSATIVM). The Extracellular segment spans residues 28-50 (VTSHDSAEVLNLSFDAKYTNARA). Asparagine 38 carries N-linked (GlcNAc...) asparagine glycosylation. A helical membrane pass occupies residues 51–73 (FVYFAITNAIASGYSFIALFLSF). The Cytoplasmic segment spans residues 74–86 (STPLWHLVFLLDV). The helical transmembrane segment at 87 to 107 (FMTLLLTSSISVALAIADVGK) threads the bilayer. At 108-130 (KGNSHAGWLPVCGQVPEFCDHVT) the chain is on the extracellular side. The helical transmembrane segment at 131 to 151 (GALIAGFSAAVLYLVLLLFSI) threads the bilayer. At 152 to 159 (HAVLNPKP) the chain is on the cytoplasmic side.

The protein belongs to the Casparian strip membrane proteins (CASP) family. In terms of assembly, homodimer and heterodimers.

Its subcellular location is the cell membrane. This is CASP-like protein 1C1 from Vitis vinifera (Grape).